A 600-amino-acid polypeptide reads, in one-letter code: MAALAPVGSPASRGPRLAAGLRLLPMLGLLQLLAEPGLGRVHHLALKDDVRHKVHLNTFGFFKDGYMVVNVSSLSLNEPEDKDVTIGFSLDRTKNDGFSSYLDEDVNYCILKKQSVSVTLLILDISRSEVRVKSPPEAGTQLPKIIFSRDEKVLGQSQEPNVNPASAGNQTQKTQDGGKSKRSTVDSKAMGEKSFSVHNNGGAVSFQFFFNISTDDQEGLYSLYFHKCLGKELPSDKFTFSLDIEITEKNPDSYLSAGEIPLPKLYISMAFFFFLSGTIWIHILRKRRNDVFKIHWLMAALPFTKSLSLVFHAIDYHYISSQGFPIEGWAVVYYITHLLKGALLFITIALIGTGWAFIKHILSDKDKKIFMIVIPLQVLANVAYIIIESTEEGTTEYGLWKDSLFLVDLLCCGAILFPVVWSIRHLQEASATDGKGDSMGPLQQRANLRAGSRIESHHFAQADLELLASSCPPASVSQRAGITAAINLAKLKLFRHYYVLIVCYIYFTRIIAFLLKLAVPFQWKWLYQLLDETATLVFFVLTGYKFRPASDNPYLQLSQEEEDLEMESVVTTSGVMESMKKVKKVTNGSVEPQGEWEGAV.

Residues 1 to 39 (MAALAPVGSPASRGPRLAAGLRLLPMLGLLQLLAEPGLG) form the signal peptide. The Extracellular segment spans residues 40–263 (RVHHLALKDD…YLSAGEIPLP (224 aa)). N-linked (GlcNAc...) asparagine glycosylation is found at Asn-70 and Asn-169. An intrachain disulfide couples Cys-109 to Cys-228. Positions 157 to 175 (SQEPNVNPASAGNQTQKTQ) are enriched in polar residues. The disordered stretch occupies residues 157-185 (SQEPNVNPASAGNQTQKTQDGGKSKRSTV). Residues 176–185 (DGGKSKRSTV) are compositionally biased toward basic and acidic residues. Asn-211 carries an N-linked (GlcNAc...) asparagine glycan. The helical transmembrane segment at 264–284 (KLYISMAFFFFLSGTIWIHIL) threads the bilayer. The Cytoplasmic segment spans residues 285–293 (RKRRNDVFK). A helical transmembrane segment spans residues 294–314 (IHWLMAALPFTKSLSLVFHAI). At 315–337 (DYHYISSQGFPIEGWAVVYYITH) the chain is on the extracellular side. A helical transmembrane segment spans residues 338–358 (LLKGALLFITIALIGTGWAFI). Residues 359-368 (KHILSDKDKK) are Cytoplasmic-facing. Residues 369–389 (IFMIVIPLQVLANVAYIIIES) traverse the membrane as a helical segment. At 390-402 (TEEGTTEYGLWKD) the chain is on the extracellular side. Residues 403–423 (SLFLVDLLCCGAILFPVVWSI) traverse the membrane as a helical segment. The Cytoplasmic segment spans residues 424–498 (RHLQEASATD…AKLKLFRHYY (75 aa)). A helical membrane pass occupies residues 499–519 (VLIVCYIYFTRIIAFLLKLAV). Over 520–524 (PFQWK) the chain is Extracellular. Residues 525 to 544 (WLYQLLDETATLVFFVLTGY) traverse the membrane as a helical segment. Residues 545–600 (KFRPASDNPYLQLSQEEEDLEMESVVTTSGVMESMKKVKKVTNGSVEPQGEWEGAV) are Cytoplasmic-facing.

The protein belongs to the LU7TM family. Post-translationally, cleaved by FURIN to yield two fragments of 17 and 35 kDa that remain associated via a disulfide bond.

It is found in the cell membrane. The protein localises to the golgi apparatus. It localises to the trans-Golgi network membrane. Its function is as follows. Has been proposed to act as a receptor for neuronostatin, a peptide derived from the somatostatin/SST precursor. Involved in blood sugar regulation through the induction of glucagon in response to low glucose. Functionally, (Microbial infection) Required for intoxication by Pseudomonas aeruginosa exotoxin A and Campylobacter jejuni CDT. May contribute to the retrograde transport of bacterial toxins, including cholera toxin, from the trans-Golgi network to the endoplasmic reticulum. This is Protein GPR107 (GPR107) from Homo sapiens (Human).